Reading from the N-terminus, the 482-residue chain is Proline--tRNA ligase (482 aa).

The protein belongs to the class-II aminoacyl-tRNA synthetase family. ProS type 3 subfamily. In terms of assembly, homodimer.

The protein localises to the cytoplasm. It carries out the reaction tRNA(Pro) + L-proline + ATP = L-prolyl-tRNA(Pro) + AMP + diphosphate. In terms of biological role, catalyzes the attachment of proline to tRNA(Pro) in a two-step reaction: proline is first activated by ATP to form Pro-AMP and then transferred to the acceptor end of tRNA(Pro). This chain is Proline--tRNA ligase, found in Thermofilum pendens (strain DSM 2475 / Hrk 5).